The chain runs to 952 residues: Isoleucine--tRNA ligase (952 aa).

The 'HIGH' region signature appears at 60 to 70 (PYANGSLHIGH). L-isoleucyl-5'-AMP is bound at residue E562. Positions 603-607 (KMSKS) match the 'KMSKS' region motif. K606 serves as a coordination point for ATP. Zn(2+) contacts are provided by C921, C924, C941, and C944.

This sequence belongs to the class-I aminoacyl-tRNA synthetase family. IleS type 1 subfamily. As to quaternary structure, monomer. Zn(2+) is required as a cofactor.

The protein localises to the cytoplasm. The catalysed reaction is tRNA(Ile) + L-isoleucine + ATP = L-isoleucyl-tRNA(Ile) + AMP + diphosphate. Functionally, catalyzes the attachment of isoleucine to tRNA(Ile). As IleRS can inadvertently accommodate and process structurally similar amino acids such as valine, to avoid such errors it has two additional distinct tRNA(Ile)-dependent editing activities. One activity is designated as 'pretransfer' editing and involves the hydrolysis of activated Val-AMP. The other activity is designated 'posttransfer' editing and involves deacylation of mischarged Val-tRNA(Ile). This is Isoleucine--tRNA ligase from Microcystis aeruginosa (strain NIES-843 / IAM M-2473).